Consider the following 335-residue polypeptide: Beta-ketoacyl-[acyl-carrier-protein] synthase III (335 aa).

Active-site residues include C116 and H256. The segment at 257-261 is ACP-binding; that stretch reads QANLR. N286 is an active-site residue.

This sequence belongs to the thiolase-like superfamily. FabH family. As to quaternary structure, homodimer.

It localises to the cytoplasm. The enzyme catalyses malonyl-[ACP] + acetyl-CoA + H(+) = 3-oxobutanoyl-[ACP] + CO2 + CoA. Its pathway is lipid metabolism; fatty acid biosynthesis. Catalyzes the condensation reaction of fatty acid synthesis by the addition to an acyl acceptor of two carbons from malonyl-ACP. Catalyzes the first condensation reaction which initiates fatty acid synthesis and may therefore play a role in governing the total rate of fatty acid production. Possesses both acetoacetyl-ACP synthase and acetyl transacylase activities. Its substrate specificity determines the biosynthesis of branched-chain and/or straight-chain of fatty acids. The protein is Beta-ketoacyl-[acyl-carrier-protein] synthase III of Porphyromonas gingivalis (strain ATCC BAA-308 / W83).